A 261-amino-acid polypeptide reads, in one-letter code: Cytochrome c oxidase subunit 3 (261 aa).

At M1–P15 the chain is on the mitochondrial matrix side. The chain crosses the membrane as a helical span at residues W16 to W34. Topologically, residues F35 to T40 are mitochondrial intermembrane. The helical transmembrane segment at A41–T66 threads the bilayer. Topologically, residues F67–T72 are mitochondrial matrix. The helical transmembrane segment at P73–S105 threads the bilayer. The Mitochondrial intermembrane portion of the chain corresponds to L106–E128. A helical membrane pass occupies residues V129–M152. The Mitochondrial matrix segment spans residues E153–N155. The chain crosses the membrane as a helical span at residues R156–E183. Topologically, residues A184–D190 are mitochondrial intermembrane. The chain crosses the membrane as a helical span at residues G191–L223. Residues K224–H232 lie on the Mitochondrial matrix side of the membrane. Residues F233–I256 traverse the membrane as a helical segment. Residues Y257–S261 lie on the Mitochondrial intermembrane side of the membrane.

This sequence belongs to the cytochrome c oxidase subunit 3 family. Component of the cytochrome c oxidase (complex IV, CIV), a multisubunit enzyme composed of 14 subunits. The complex is composed of a catalytic core of 3 subunits MT-CO1, MT-CO2 and MT-CO3, encoded in the mitochondrial DNA, and 11 supernumerary subunits COX4I, COX5A, COX5B, COX6A, COX6B, COX6C, COX7A, COX7B, COX7C, COX8 and NDUFA4, which are encoded in the nuclear genome. The complex exists as a monomer or a dimer and forms supercomplexes (SCs) in the inner mitochondrial membrane with NADH-ubiquinone oxidoreductase (complex I, CI) and ubiquinol-cytochrome c oxidoreductase (cytochrome b-c1 complex, complex III, CIII), resulting in different assemblies (supercomplex SCI(1)III(2)IV(1) and megacomplex MCI(2)III(2)IV(2)).

It is found in the mitochondrion inner membrane. The enzyme catalyses 4 Fe(II)-[cytochrome c] + O2 + 8 H(+)(in) = 4 Fe(III)-[cytochrome c] + 2 H2O + 4 H(+)(out). Functionally, component of the cytochrome c oxidase, the last enzyme in the mitochondrial electron transport chain which drives oxidative phosphorylation. The respiratory chain contains 3 multisubunit complexes succinate dehydrogenase (complex II, CII), ubiquinol-cytochrome c oxidoreductase (cytochrome b-c1 complex, complex III, CIII) and cytochrome c oxidase (complex IV, CIV), that cooperate to transfer electrons derived from NADH and succinate to molecular oxygen, creating an electrochemical gradient over the inner membrane that drives transmembrane transport and the ATP synthase. Cytochrome c oxidase is the component of the respiratory chain that catalyzes the reduction of oxygen to water. Electrons originating from reduced cytochrome c in the intermembrane space (IMS) are transferred via the dinuclear copper A center (CU(A)) of subunit 2 and heme A of subunit 1 to the active site in subunit 1, a binuclear center (BNC) formed by heme A3 and copper B (CU(B)). The BNC reduces molecular oxygen to 2 water molecules using 4 electrons from cytochrome c in the IMS and 4 protons from the mitochondrial matrix. This Cephalophorus natalensis (Natal red duiker) protein is Cytochrome c oxidase subunit 3 (MT-CO3).